Consider the following 351-residue polypeptide: Translation initiation factor eIF2B subunit beta (351 aa).

Belongs to the eIF-2B alpha/beta/delta subunits family. As to quaternary structure, component of the translation initiation factor 2B (eIF2B) complex which is a heterodecamer of two sets of five different subunits: alpha, beta, gamma, delta and epsilon. Subunits alpha, beta and delta comprise a regulatory subcomplex and subunits epsilon and gamma comprise a catalytic subcomplex. Within the complex, the hexameric regulatory complex resides at the center, with the two heterodimeric catalytic subcomplexes bound on opposite sides.

The protein localises to the cytoplasm. The protein resides in the cytosol. Its activity is regulated as follows. Activated by the chemical integrated stress response (ISR) inhibitor ISRIB which stimulates guanine nucleotide exchange factor activity for both phosphorylated and unphosphorylated eIF2. Its function is as follows. Acts as a component of the translation initiation factor 2B (eIF2B) complex, which catalyzes the exchange of GDP for GTP on eukaryotic initiation factor 2 (eIF2) gamma subunit. Its guanine nucleotide exchange factor activity is repressed when bound to eIF2 complex phosphorylated on the alpha subunit, thereby limiting the amount of methionyl-initiator methionine tRNA available to the ribosome and consequently global translation is repressed. The chain is Translation initiation factor eIF2B subunit beta (EIF2B2) from Oryctolagus cuniculus (Rabbit).